The primary structure comprises 138 residues: UPF0251 protein Dole_1957 (138 aa).

The protein belongs to the UPF0251 family.

The protein is UPF0251 protein Dole_1957 of Desulfosudis oleivorans (strain DSM 6200 / JCM 39069 / Hxd3) (Desulfococcus oleovorans).